Consider the following 479-residue polypeptide: Trigger factor (479 aa).

Residues 174 to 261 enclose the PPIase FKBP-type domain; it reads GDIAVVSFSG…LKELKTRELP (88 aa). The segment at 437–479 is disordered; that stretch reads KVLESEAKTSKPAAKSKGSKTKSTKTKTNKAKTEKPASDKTKS. Positions 453 to 466 are enriched in basic residues; that stretch reads KGSKTKSTKTKTNK. Residues 467–479 are compositionally biased toward basic and acidic residues; the sequence is AKTEKPASDKTKS.

The protein belongs to the FKBP-type PPIase family. Tig subfamily.

The protein localises to the cytoplasm. It catalyses the reaction [protein]-peptidylproline (omega=180) = [protein]-peptidylproline (omega=0). In terms of biological role, involved in protein export. Acts as a chaperone by maintaining the newly synthesized protein in an open conformation. Functions as a peptidyl-prolyl cis-trans isomerase. The sequence is that of Trigger factor from Prochlorococcus marinus (strain MIT 9303).